Here is a 282-residue protein sequence, read N- to C-terminus: RsbT co-antagonist protein RsbRC (282 aa).

Phosphoserine occurs at positions 165 and 174. Residues Ser165–Asp276 form the STAS domain. Thr186 bears the Phosphothreonine mark.

Probably present in the stressosome with RsbRA, RsbRB, RsbRD and RsbS. Post-translationally, phosphorylated by RsbT.

Functionally, one of 4 functionally non-identical RsbR paralogs, it functions in the environmental signaling branch of the general stress response. Its function is as follows. Negative regulator of sigma-B activity. Non-phosphorylated RsbS binds to RsbT, preventing its association with RsbU. Requires any one of RsbRA, RsbRB, RsbRC or RsbRD to sequester RsbT. When RsbS and the RsbR paralog(s) are phosphorylated, they release RsbT, which can then bind and activate RsbU. This is RsbT co-antagonist protein RsbRC (rsbRC) from Bacillus subtilis (strain 168).